Reading from the N-terminus, the 146-residue chain is 3-dehydroquinate dehydratase (146 aa).

Tyr22 functions as the Proton acceptor in the catalytic mechanism. Residues Asn73, His79, and Asp86 each coordinate substrate. Catalysis depends on His99, which acts as the Proton donor. Substrate-binding positions include 100 to 101 and Arg110; that span reads LS.

Belongs to the type-II 3-dehydroquinase family. In terms of assembly, homododecamer.

The enzyme catalyses 3-dehydroquinate = 3-dehydroshikimate + H2O. Its pathway is metabolic intermediate biosynthesis; chorismate biosynthesis; chorismate from D-erythrose 4-phosphate and phosphoenolpyruvate: step 3/7. Its function is as follows. Catalyzes a trans-dehydration via an enolate intermediate. This is 3-dehydroquinate dehydratase from Synechococcus sp. (strain CC9902).